The sequence spans 621 residues: NADPH-dependent diflavin oxidoreductase 1 (621 aa).

The Flavodoxin-like domain maps to 6–168; sequence IAVLYGSETG…VYFEFEKRII (163 aa). Residues 12–17, 59–62, 106–115, and E142 each bind FMN; these read SETGNA, STTG, and LGDSSYPKFN. An FAD-binding FR-type domain is found at 224-489; that stretch reads KLIKTGTITL…VGPGVGLAPL (266 aa). Residues R381, 411–414, and 443–446 contribute to the FAD site; these read RLYS and GVCT. NADP(+) is bound by residues 536 to 537 and 545 to 549; these read SR and TKYVQ. W621 is an FAD binding site.

The protein belongs to the NADPH-dependent diflavin oxidoreductase NDOR1 family. It in the N-terminal section; belongs to the flavodoxin family. This sequence in the C-terminal section; belongs to the flavoprotein pyridine nucleotide cytochrome reductase family. In terms of assembly, interacts with DRE2; as part of the cytosolic iron-sulfur (Fe-S) protein assembly (CIA) machinery. FAD serves as cofactor. FMN is required as a cofactor.

It is found in the cytoplasm. It localises to the mitochondrion. It catalyses the reaction 2 oxidized [2Fe-2S]-[protein] + NADPH = 2 reduced [2Fe-2S]-[protein] + NADP(+) + H(+). Its function is as follows. NADPH-dependent reductase which is a central component of the cytosolic iron-sulfur (Fe-S) protein assembly (CIA) machinery. Transfers electrons from NADPH via its FAD and FMN prosthetic groups to the [2Fe-2S] cluster of DRE2, another key component of the CIA machinery. In turn, this reduced cluster provides electrons for assembly of cytosolic iron-sulfur cluster proteins. Positively controls H(2)O(2)-induced cell death. The sequence is that of NADPH-dependent diflavin oxidoreductase 1 from Candida glabrata (strain ATCC 2001 / BCRC 20586 / JCM 3761 / NBRC 0622 / NRRL Y-65 / CBS 138) (Yeast).